The sequence spans 300 residues: Porphobilinogen deaminase (300 aa).

At cysteine 242 the chain carries S-(dipyrrolylmethanemethyl)cysteine.

It belongs to the HMBS family. As to quaternary structure, monomer. It depends on dipyrromethane as a cofactor.

It carries out the reaction 4 porphobilinogen + H2O = hydroxymethylbilane + 4 NH4(+). It functions in the pathway porphyrin-containing compound metabolism; protoporphyrin-IX biosynthesis; coproporphyrinogen-III from 5-aminolevulinate: step 2/4. Tetrapolymerization of the monopyrrole PBG into the hydroxymethylbilane pre-uroporphyrinogen in several discrete steps. This chain is Porphobilinogen deaminase, found in Blochmanniella pennsylvanica (strain BPEN).